The primary structure comprises 842 residues: Elongation factor 2 (842 aa).

One can recognise a tr-type G domain in the interval 17–346 (TNVRNMSVIA…MIVLHLPSPV (330 aa)). GTP is bound by residues 26–33 (AHVDHGKS), 158–161 (NKVD), and 213–215 (SGL). His699 carries the post-translational modification Diphthamide.

This sequence belongs to the TRAFAC class translation factor GTPase superfamily. Classic translation factor GTPase family. EF-G/EF-2 subfamily.

It is found in the cytoplasm. The enzyme catalyses GTP + H2O = GDP + phosphate + H(+). Its function is as follows. Catalyzes the GTP-dependent ribosomal translocation step during translation elongation. During this step, the ribosome changes from the pre-translocational (PRE) to the post-translocational (POST) state as the newly formed A-site-bound peptidyl-tRNA and P-site-bound deacylated tRNA move to the P and E sites, respectively. Catalyzes the coordinated movement of the two tRNA molecules, the mRNA and conformational changes in the ribosome. This chain is Elongation factor 2 (EFT2), found in Candida albicans (strain SC5314 / ATCC MYA-2876) (Yeast).